The primary structure comprises 692 residues: Proprotein convertase subtilisin/kexin type 9 (692 aa).

The signal sequence occupies residues Met-1 to Ala-30. The propeptide occupies Gln-31–Gln-152. Tyr-38 is subject to Sulfotyrosine. Ser-47 bears the Phosphoserine mark. An Inhibitor I9 domain is found at Thr-77–Val-149. The region spanning Pro-155–Trp-461 is the Peptidase S8 domain. Residues Asp-186 and His-226 each act as charge relay system in the active site. 2 disulfides stabilise this stretch: Cys-223-Cys-255 and Cys-323-Cys-358. Residue Ser-386 is the Charge relay system of the active site. A C-terminal domain region spans residues Gly-450 to Gln-692. 3 cysteine pairs are disulfide-bonded: Cys-457–Cys-527, Cys-477–Cys-526, and Cys-486–Cys-509. Asn-533 carries an N-linked (GlcNAc...) asparagine glycan. 6 cysteine pairs are disulfide-bonded: Cys-534/Cys-601, Cys-552/Cys-600, Cys-562/Cys-588, Cys-608/Cys-679, Cys-626/Cys-678, and Cys-635/Cys-654. At Ser-688 the chain carries Phosphoserine.

The protein belongs to the peptidase S8 family. In terms of assembly, monomer. Can self-associate to form dimers and higher multimers which may have increased LDLR degrading activity. The precursor protein but not the mature protein may form multimers. Interacts with APOB, VLDLR, LRP8/APOER2 and BACE1. The full-length immature form (pro-PCSK9) interacts with SCNN1A, SCNN1B and SCNN1G. The pro-PCSK9 form (via C-terminal domain) interacts with LDLR. Interacts (via the C-terminal domain) with ANXA2 (via repeat Annexin 1); the interaction inhibits the degradation of LDLR. Requires Ca(2+) as cofactor. Post-translationally, cleavage by furin and PCSK5 generates a truncated inactive protein that is unable to induce LDLR degradation. In terms of processing, undergoes autocatalytic cleavage in the endoplasmic reticulum to release the propeptide from the N-terminus and the cleavage of the propeptide is strictly required for its maturation and activation. The cleaved propeptide however remains associated with the catalytic domain through non-covalent interactions, preventing potential substrates from accessing its active site. As a result, it is secreted from cells as a propeptide-containing, enzymatically inactive protein. Phosphorylation protects the propeptide against proteolysis.

It localises to the cytoplasm. It is found in the secreted. Its subcellular location is the endosome. The protein localises to the lysosome. The protein resides in the cell surface. It localises to the endoplasmic reticulum. It is found in the golgi apparatus. Its proteolytic activity is autoinhibited by the non-covalent binding of the propeptide to the catalytic domain. Inhibited by EGTA. Functionally, crucial player in the regulation of plasma cholesterol homeostasis. Binds to low-density lipid receptor family members: low density lipoprotein receptor (LDLR), very low density lipoprotein receptor (VLDLR), apolipoprotein E receptor (LRP1/APOER) and apolipoprotein receptor 2 (LRP8/APOER2), and promotes their degradation in intracellular acidic compartments. Acts via a non-proteolytic mechanism to enhance the degradation of the hepatic LDLR through a clathrin LDLRAP1/ARH-mediated pathway. May prevent the recycling of LDLR from endosomes to the cell surface or direct it to lysosomes for degradation. Can induce ubiquitination of LDLR leading to its subsequent degradation. Inhibits intracellular degradation of APOB via the autophagosome/lysosome pathway in a LDLR-independent manner. Involved in the disposal of non-acetylated intermediates of BACE1 in the early secretory pathway. Inhibits epithelial Na(+) channel (ENaC)-mediated Na(+) absorption by reducing ENaC surface expression primarily by increasing its proteasomal degradation. Regulates neuronal apoptosis via modulation of LRP8/APOER2 levels and related anti-apoptotic signaling pathways. The protein is Proprotein convertase subtilisin/kexin type 9 (PCSK9) of Pan troglodytes (Chimpanzee).